Here is a 418-residue protein sequence, read N- to C-terminus: Light-independent protochlorophyllide reductase subunit N (418 aa).

[4Fe-4S] cluster is bound by residues C17, C42, and C103.

Belongs to the BchN/ChlN family. As to quaternary structure, protochlorophyllide reductase is composed of three subunits; ChlL, ChlN and ChlB. Forms a heterotetramer of two ChlB and two ChlN subunits. Requires [4Fe-4S] cluster as cofactor.

It catalyses the reaction chlorophyllide a + oxidized 2[4Fe-4S]-[ferredoxin] + 2 ADP + 2 phosphate = protochlorophyllide a + reduced 2[4Fe-4S]-[ferredoxin] + 2 ATP + 2 H2O. It participates in porphyrin-containing compound metabolism; chlorophyll biosynthesis (light-independent). In terms of biological role, component of the dark-operative protochlorophyllide reductase (DPOR) that uses Mg-ATP and reduced ferredoxin to reduce ring D of protochlorophyllide (Pchlide) to form chlorophyllide a (Chlide). This reaction is light-independent. The NB-protein (ChlN-ChlB) is the catalytic component of the complex. The chain is Light-independent protochlorophyllide reductase subunit N from Prochlorococcus marinus (strain MIT 9211).